A 118-amino-acid polypeptide reads, in one-letter code: UPF0295 protein BC_0520 (118 aa).

The next 2 membrane-spanning stretches (helical) occupy residues 12–32 (IRTFALSLVFIGLFIAYLGVF) and 43–63 (FMMVGFLAVIASTVVYFWIGM).

This sequence belongs to the UPF0295 family.

Its subcellular location is the cell membrane. This is UPF0295 protein BC_0520 from Bacillus cereus (strain ATCC 14579 / DSM 31 / CCUG 7414 / JCM 2152 / NBRC 15305 / NCIMB 9373 / NCTC 2599 / NRRL B-3711).